A 211-amino-acid polypeptide reads, in one-letter code: uncharacterized protein (211 aa).

Positions 1–20 (MSRVQISTVLAIDTATPAVT) are cleaved as a signal peptide.

To M.leprae ML0378.

This is an uncharacterized protein from Mycobacterium tuberculosis (strain CDC 1551 / Oshkosh).